The chain runs to 173 residues: MIFKGKAHKYYDNIDTDVIIPARYLNTSDPAELAKHCLEDLDKEFVNKVKKGDILVAGRNFGCGSSREHAPIAIKACGVSCVIAKSFARIFYRNAINIGLPIVECEEAVDGIEAGDEVEVDLVKGIIKNLTKNKEFKAKPFPEFMQNIMKAGGLIEFVKGELKKDAWDSCNSW.

Belongs to the LeuD family. LeuD type 2 subfamily. As to quaternary structure, heterodimer of LeuC and LeuD.

The catalysed reaction is (2R,3S)-3-isopropylmalate = (2S)-2-isopropylmalate. The protein operates within amino-acid biosynthesis; L-leucine biosynthesis; L-leucine from 3-methyl-2-oxobutanoate: step 2/4. Functionally, catalyzes the isomerization between 2-isopropylmalate and 3-isopropylmalate, via the formation of 2-isopropylmaleate. The chain is 3-isopropylmalate dehydratase small subunit from Caldicellulosiruptor saccharolyticus (strain ATCC 43494 / DSM 8903 / Tp8T 6331).